We begin with the raw amino-acid sequence, 499 residues long: Sensor histidine kinase VxrA (499 aa).

Over 1–12 (MRYSFCMLEKTN) the chain is Cytoplasmic. Residues 13–31 (IPLIRALNLTLVSLCFAML) form a helical membrane-spanning segment. At 32–257 (PNPVHADSLP…ICWDVEDHSD (226 aa)) the chain is on the periplasmic side. 2 cysteine pairs are disulfide-bonded: Cys-101/Cys-122 and Cys-241/Cys-249. A helical membrane pass occupies residues 258 to 280 (LLRTSMIILVIANIFLVLGWSGY). The Cytoplasmic segment spans residues 281–499 (RWNSKRQEMR…IPCETDTASR (219 aa)). Residues 298–494 (ILTHELRTPI…TFILEIPCET (197 aa)) enclose the Histidine kinase domain. His-301 carries the phosphohistidine; by autocatalysis modification.

As to quaternary structure, homodimer. In terms of processing, autophosphorylated. Contains two disulfide bonds that may play a role in the stability of the protein. However, the disulfide bonds are not absolutely essential, as some activity and growth are detected in the absence of each disulfide bond.

It localises to the cell inner membrane. It catalyses the reaction ATP + protein L-histidine = ADP + protein N-phospho-L-histidine.. Its function is as follows. Member of the two-component regulatory system VxrB/VxrA involved in the regulation of diverses processes, including virulence, the type VI secretion system (T6SS) and biofilm formation. Functions as a sensor protein kinase which is autophosphorylated at a histidine residue and transfers its phosphate group to the conserved aspartic acid residue in the regulatory domain of VxrB. Is critical for colonization in the infant mouse model. Contributes to the resistance to beta-lactam treatment. The protein is Sensor histidine kinase VxrA of Vibrio cholerae serotype O1 (strain ATCC 39315 / El Tor Inaba N16961).